The sequence spans 244 residues: Lipoprotein-releasing system ATP-binding protein LolD (244 aa).

The ABC transporter domain maps to 19–244 (IRAEALAKTY…KLRELAPSAV (226 aa)). ATP is bound at residue 55 to 62 (GASGAGKS).

The protein belongs to the ABC transporter superfamily. Lipoprotein translocase (TC 3.A.1.125) family. As to quaternary structure, the complex is composed of two ATP-binding proteins (LolD) and two transmembrane proteins (LolC and LolE).

It localises to the cell inner membrane. Part of the ABC transporter complex LolCDE involved in the translocation of mature outer membrane-directed lipoproteins, from the inner membrane to the periplasmic chaperone, LolA. Responsible for the formation of the LolA-lipoprotein complex in an ATP-dependent manner. This Xanthomonas oryzae pv. oryzae (strain MAFF 311018) protein is Lipoprotein-releasing system ATP-binding protein LolD.